The sequence spans 816 residues: H(+)/Cl(-) exchange transporter 5 (816 aa).

The tract at residues 1–26 (MAMWQGAMDNRGFQQGSFSSFQNSSS) is disordered. Topologically, residues 1 to 124 (MAMWQGAMDN…WALIHSVSDA (124 aa)) are cytoplasmic. The span at 12 to 25 (GFQQGSFSSFQNSS) shows a compositional bias: low complexity. 2 consecutive transmembrane segments (helical) span residues 125–162 (FSGW…ICTG) and 208–231 (VNYF…VKVF). A Selectivity filter part_1 motif is present at residues 237-241 (GSGIP). A chloride-binding site is contributed by Ser238. Residues 240-247 (IPEIKTIL) constitute an intramembrane region (helical). 2 helical membrane passes run 256–275 (LGKW…VSSG) and 281–300 (EGPL…HCFN). Positions 279-283 (GKEGP) match the Selectivity filter part_2 motif. 2 intramembrane regions (helical) span residues 312-324 (VLSA…VSVA) and 328-336 (PIGGVLFSL). Helical transmembrane passes span 348-366 (LWRS…RSIN), 389-415 (LVPF…AWCR), 422-442 (LGKY…ILAF), 498-518 (MWQL…TFGM), and 523-542 (GLFI…LGVG). A Selectivity filter part_3 motif is present at residues 523–527 (GLFIP). Chloride is bound at residue Phe525. The segment at residues 570–584 (GLYAMVGAAACLGGV) is an intramembrane region (helical). The note=Loop between two helices intramembrane region spans 585–587 (TRM). Positions 588 to 599 (TVSLVVIMFELT) form an intramembrane region, helical. The segment at residues 600 to 604 (GGLEY) is an intramembrane region (note=Loop between two helices). The helical transmembrane segment at 605-622 (IVPLMAAAMTSKWVADAL) threads the bilayer. Residues 623–816 (GREGIYDAHI…NQDPDSILFN (194 aa)) are Cytoplasmic-facing. Residue Tyr628 participates in chloride binding. CBS domains follow at residues 656–720 (MKPR…ARKK) and 752–812 (ILDL…DPDS). ATP is bound by residues Thr666, 687–689 (YSG), and 794–797 (TKKD).

Belongs to the chloride channel (TC 2.A.49) family. ClC-5/CLCN5 subfamily. Interacts with NEDD4 and NEDD4L. In terms of processing, ubiquitinated by NEDD4L in the presence of albumin; which promotes endocytosis and proteasomal degradation. As to expression, kidney. Moderately expressed in aortic vascular smooth muscle and endothelial cells, and at a slightly higher level in the coronary vascular smooth muscle.

The protein resides in the golgi apparatus membrane. It is found in the endosome membrane. Its subcellular location is the cell membrane. It carries out the reaction 2 chloride(in) + H(+)(out) = 2 chloride(out) + H(+)(in). Its function is as follows. Proton-coupled chloride transporter. Functions as antiport system and exchanges chloride ions against protons. Important for normal acidification of the endosome lumen. May play an important role in renal tubular function. The CLC channel family contains both chloride channels and proton-coupled anion transporters that exchange chloride or another anion for protons. The absence of conserved gating glutamate residues is typical for family members that function as channels. The sequence is that of H(+)/Cl(-) exchange transporter 5 from Homo sapiens (Human).